Consider the following 206-residue polypeptide: uncharacterized protein (206 aa).

This is an uncharacterized protein from Aquifex aeolicus (strain VF5).